We begin with the raw amino-acid sequence, 522 residues long: MRTAFELVAWSAHRQPGAVALLDPESGHRLTYSELLKRIEGVATVLASRGVVRDELVATAMANTLDHAIILLALNRLGAIPVIINPRLKADEMVQLIRRDNIRTVIRTVAEGKSGTPADIDGVEELTLSAEVLSEGLRIDGNATPAFEAPRPEDPAFVFYTSGTTGLPKGVVIPHRAIEPRVLFMSTQAGLRFGGHNNLLGLMPIHHVIGFFGVFLGSLAFNGTWIPVTAFDPAQAVKWVEELDVTCLFASPTHFDALLATSEFAPEKLKSVDSVIFAGAAINQSILKRLEKCLQVPIVDIYGTTETMNSLFNPDATQERGLRPGYHSRVQFASVSESPSVALPAGVEGELVVDASADATFTHYLNNPEATAAKIVDGWYRTGDSGYVDDSGRVILTGRIDDMINTGAENVHAEEVEQIISRHPAVVEAAVVGLPDTRWGEVVTAVVVVSEPLTADLLDQVCLDSELANFKRPRRYFVVNELPRNAAMKVSRRTLREYLGAHAADQPNPETGFIQFTIEESQ.

ATP contacts are provided by residues 161-169, 300-305, and asparagine 410; these read TSGTTGLPK and DIYGTT.

It belongs to the ATP-dependent AMP-binding enzyme family. Homodimer. It depends on Mg(2+) as a cofactor.

The enzyme catalyses 4-chlorobenzoate + ATP + CoA = 4-chlorobenzoyl-CoA + AMP + diphosphate. Its pathway is xenobiotic degradation; 4-chlorobenzoate degradation; 4-hydroxybenzoate from 4-chlorobenzoate: step 2/3. Its function is as follows. Catalyzes the formation of chlorobenzoyl-CoA via a 2 step reaction. First 4-chlorobenzoate is adenylated by ATP, followed by acyl transfer from the 4-chlorobenzoyl-AMP intermediate to CoA. Benzoate, 4-bromobenzoate, 4-iodobenzoate and 4-fluorobenzoate also act as substrates. Inactive towards 4-nitrobenzoate. The protein is 4-chlorobenzoate--CoA ligase of Arthrobacter sp.